Reading from the N-terminus, the 345-residue chain is MSESDAEETKISTDPVDNAWAMKIPTFREEDNPHGMVEESSFATLFPKYRERYLKEVWPLVEQCLAEHHLKAELDLMEGSMVVRTSRKTWDPYIIIKARDMIKLMARSVPFEQAKRVLQDDIGCDIIKIGNLVHKKEKFVKRRQRLIGPNGATLKSIELLTDCYVLVQGNTVSALGPYKGLQQVRDIVLETMNNVHPIYNIKALMIKRELMKDPRLANEDWSRFLPKFKNKNISKRKQPKVKKQKKEYTPFPPSQPESKVDKQLASGEYFLNQEQKQAKRNQERTEKQKEAAKRQDERRNKDFVPPTEESASSSLKKEDGFSSSKVDVKALKAKLIKANKKARSS.

A KH domain is found at aspartate 125–asparagine 193. Basic residues predominate over residues asparagine 232 to lysine 245. Disordered regions lie at residues asparagine 232–valine 260 and glutamine 273–lysine 329. Positions phenylalanine 270–arginine 298 form a coiled coil. Basic and acidic residues-rich tracts occupy residues lysine 276–aspartate 302 and leucine 315–lysine 329.

It belongs to the KRR1 family. In terms of assembly, monomer. Component of the ribosomal small subunit (SSU) processome.

Its subcellular location is the nucleus. The protein resides in the nucleolus. Its function is as follows. Required for 40S ribosome biogenesis. Involved in nucleolar processing of pre-18S ribosomal RNA and ribosome assembly. Binds to RNA. Required for female germline development, cell viability during eye development and for survival of dividing cells and epithelial cells during early wing disk development. In Drosophila erecta (Fruit fly), this protein is KRR1 small subunit processome component homolog.